The chain runs to 192 residues: Orotate phosphoribosyltransferase (192 aa).

116-124 provides a ligand contact to 5-phospho-alpha-D-ribose 1-diphosphate; that stretch reads EDIVTTGLS. 2 residues coordinate orotate: Thr120 and Arg148.

It belongs to the purine/pyrimidine phosphoribosyltransferase family. PyrE subfamily. Homodimer. The cofactor is Mg(2+).

It carries out the reaction orotidine 5'-phosphate + diphosphate = orotate + 5-phospho-alpha-D-ribose 1-diphosphate. It participates in pyrimidine metabolism; UMP biosynthesis via de novo pathway; UMP from orotate: step 1/2. In terms of biological role, catalyzes the transfer of a ribosyl phosphate group from 5-phosphoribose 1-diphosphate to orotate, leading to the formation of orotidine monophosphate (OMP). This is Orotate phosphoribosyltransferase from Brucella anthropi (strain ATCC 49188 / DSM 6882 / CCUG 24695 / JCM 21032 / LMG 3331 / NBRC 15819 / NCTC 12168 / Alc 37) (Ochrobactrum anthropi).